Reading from the N-terminus, the 322-residue chain is Nuclease 1, mitochondrial (322 aa).

H142 (proton acceptor) is an active-site residue. N174 is a binding site for Mg(2+).

This sequence belongs to the DNA/RNA non-specific endonuclease family. As to quaternary structure, homodimer. The cofactor is Mn(2+). It depends on Mg(2+) as a cofactor.

It is found in the mitochondrion inner membrane. This enzyme has both RNase and DNase activity. It degrades single-stranded DNA and RNA. The sequence is that of Nuclease 1, mitochondrial (pnu1) from Schizosaccharomyces pombe (strain 972 / ATCC 24843) (Fission yeast).